The chain runs to 88 residues: Small ribosomal subunit protein bS16c (88 aa).

Belongs to the bacterial ribosomal protein bS16 family.

Its subcellular location is the plastid. It localises to the chloroplast. The protein is Small ribosomal subunit protein bS16c of Jasminum nudiflorum (Winter jasmine).